We begin with the raw amino-acid sequence, 340 residues long: Organic solute transporter subunit alpha (340 aa).

Over 1–48 (MEPGRTQIKLDPRYTADLLEVLKTNYGIPSACFSQPPTAAQLLRALGP) the chain is Extracellular. The chain crosses the membrane as a helical span at residues 49-69 (VELALTSILTLLALGSIAIFL). The Cytoplasmic segment spans residues 70–87 (EDAVYLYKNTLCPIKRRT). Residues 88–108 (LLWKSSAPTVVSVLCCFGLWI) form a helical membrane-spanning segment. Topologically, residues 109–118 (PRSLVLVEMT) are extracellular. The chain crosses the membrane as a helical span at residues 119–139 (ITSFYAVCFYLLMLVMVEGFG). At 140-181 (GKEAVLRTLRDTPMMVHTGPCCCCCPCCPRLLLTRKKLQLLM) the chain is on the cytoplasmic side. The chain crosses the membrane as a helical span at residues 182–202 (LGPFQYAFLKITLTLVGLFLV). Topologically, residues 203-218 (PDGIYDPADISEGSTA) are extracellular. The chain crosses the membrane as a helical span at residues 219–239 (LWINTFLGVSTLLALWTLGII). The Cytoplasmic portion of the chain corresponds to 240–255 (SRQARLHLGEQNMGAK). The chain crosses the membrane as a helical span at residues 256–276 (FALFQVLLILTALQPSIFSVL). Residues 277–294 (ANGGQIACSPPYSSKTRS) lie on the Extracellular side of the membrane. The chain crosses the membrane as a helical span at residues 295–317 (QVMNCHLLILETFLMTVLTRMYY). Residues 318–340 (RRKDHKVGYETFSSPDLDLNLKA) are Cytoplasmic-facing. Serine 330 carries the phosphoserine modification.

This sequence belongs to the OST-alpha family. As to quaternary structure, interacts with SLC51B. The Ost-alpha/Ost-beta complex is a heterodimer composed of alpha (SLC51A) and beta (SLC51B) subunit. As to expression, widely expressed with a high expression in ileum. Expressed in testis, colon, liver, small intestine, kidney, ovary and adrenal gland; and at low levels in heart, lung, brain, pituitary, thyroid gland, uterus, prostate, mammary gland and fat.

It is found in the cell membrane. Its subcellular location is the endoplasmic reticulum membrane. It catalyses the reaction taurocholate(out) = taurocholate(in). The enzyme catalyses estrone 3-sulfate(out) = estrone 3-sulfate(in). It carries out the reaction dehydroepiandrosterone 3-sulfate(out) = dehydroepiandrosterone 3-sulfate(in). The catalysed reaction is tauroursodeoxycholate(out) = tauroursodeoxycholate(in). It catalyses the reaction glycoursodeoxycholate(out) = glycoursodeoxycholate(in). The enzyme catalyses glycocholate(out) = glycocholate(in). It carries out the reaction taurochenodeoxycholate(out) = taurochenodeoxycholate(in). The catalysed reaction is glycochenodeoxycholate(out) = glycochenodeoxycholate(in). It catalyses the reaction taurodeoxycholate(out) = taurodeoxycholate(in). The enzyme catalyses glycodeoxycholate(out) = glycodeoxycholate(in). It carries out the reaction prostaglandin E2(out) = prostaglandin E2(in). Functionally, essential component of the Ost-alpha/Ost-beta complex, a heterodimer that acts as the intestinal basolateral transporter responsible for bile acid export from enterocytes into portal blood. Efficiently transports the major species of bile acids (taurocholate). Taurine conjugates are transported more efficiently across the basolateral membrane than glycine-conjugated bile acids. Can also transport steroids such as estrone 3-sulfate and dehydroepiandrosterone 3-sulfate, therefore playing a role in the enterohepatic circulation of sterols. Able to transport eicosanoids such as prostaglandin E2. This Homo sapiens (Human) protein is Organic solute transporter subunit alpha (SLC51A).